Reading from the N-terminus, the 711-residue chain is Putative DNA topoisomerase 3 (711 aa).

The Toprim domain maps to 2 to 135 (KYLILAEKPS…LRRLWISSVT (134 aa)). 2 residues coordinate Mg(2+): Glu-8 and Asp-104. The Topo IA-type catalytic domain maps to 152–580 (YNDLYYAALA…EMKGFTKDVV (429 aa)). Residues 186–191 (SLGRVQ) are interaction with DNA. Tyr-305 functions as the O-(5'-phospho-DNA)-tyrosine intermediate in the catalytic mechanism. A disordered region spans residues 691–711 (MNKNEGLDNNPFKDALKNLNL).

Belongs to the type IA topoisomerase family. It depends on Mg(2+) as a cofactor.

It carries out the reaction ATP-independent breakage of single-stranded DNA, followed by passage and rejoining.. Releases the supercoiling and torsional tension of DNA, which is introduced during the DNA replication and transcription, by transiently cleaving and rejoining one strand of the DNA duplex. Introduces a single-strand break via transesterification at a target site in duplex DNA. The scissile phosphodiester is attacked by the catalytic tyrosine of the enzyme, resulting in the formation of a DNA-(5'-phosphotyrosyl)-enzyme intermediate and the expulsion of a 3'-OH DNA strand. The free DNA strand then undergoes passage around the unbroken strand, thus removing DNA supercoils. Finally, in the religation step, the DNA 3'-OH attacks the covalent intermediate to expel the active-site tyrosine and restore the DNA phosphodiester backbone. This chain is Putative DNA topoisomerase 3, found in Staphylococcus aureus (strain bovine RF122 / ET3-1).